We begin with the raw amino-acid sequence, 452 residues long: Protein mab-21-like 4 (452 aa).

This is Protein mab-21-like 4 (Mab21l4) from Mus musculus (Mouse).